The chain runs to 521 residues: MKIVILAPTITPIVSYGGLGDVMRDLPKFLKKGNEVVVLTLNHYNRYFTLPYEDIKKITVIYKGAKITFDVLRTKHPTTGVDLIVFSNESVNNLNVWDPIKYEIFADLVITYLDEVKDIDVVSGHDWMCGLAIAKCNDILDLPTTLTIHNEAFKGEMIEYKGEVMTFLELGIKYADAVNTVSPSHAEEIKNYPYIKKYLNNKPFCGILNGIDIDEYDPMKIIERMCNLSNNKLDPRNYAYISPYSAEDSHNIKPKIKYSWFYRGGVYEYVEDWNKIDKGISATDVEVHGGVDGDIETPLIGFVGRATHQKGFNTMFEAIPELLEKHDIRFVFLTKGDRDIEERLKNLANEHDGRILALIGYSLPLSSLVFAGSDWIIMPSYWEPCGLVQMEAMAYCTPVIATETGGLKDTIIPLHPNPYEHPNFDKATGVLFKVPDKVGFMWGVEHALNWTFYKLNEICMFMQYIRYKCPKHPYDENSPLSMMMKNCYYHVFRNLSWQNSPSIRKYKGLFGGAIYNHYLQP.

It belongs to the glycosyltransferase 1 family. Bacterial/plant glycogen synthase subfamily.

The catalysed reaction is [(1-&gt;4)-alpha-D-glucosyl](n) + ADP-alpha-D-glucose = [(1-&gt;4)-alpha-D-glucosyl](n+1) + ADP + H(+). The protein operates within glycan biosynthesis; glycogen biosynthesis. In terms of biological role, synthesizes alpha-1,4-glucan chains using ADP-glucose. This Methanocaldococcus jannaschii (strain ATCC 43067 / DSM 2661 / JAL-1 / JCM 10045 / NBRC 100440) (Methanococcus jannaschii) protein is Probable glycogen synthase (glgA).